Here is a 111-residue protein sequence, read N- to C-terminus: Probable 4-amino-4-deoxy-L-arabinose-phosphoundecaprenol flippase subunit ArnE (111 aa).

The Cytoplasmic segment spans residues 1–35; the sequence is MIWLTLVFASLLSVAGQLCQKQATCFAAVNKRRKH. The chain crosses the membrane as a helical span at residues 36-56; sequence IVLWLGLALACLGLAMVLWLL. The 70-residue stretch at 40–109 folds into the EamA domain; it reads LGLALACLGL…IIGGIVILGS (70 aa). At 57–60 the chain is on the periplasmic side; that stretch reads VLQN. A helical membrane pass occupies residues 61–81; that stretch reads VPVGIAYPMLSLNFVWVTLAA. Over 82–87 the chain is Cytoplasmic; sequence VKLWHE. Residues 88–108 form a helical membrane-spanning segment; the sequence is PVSLRHWCGVAFIIGGIVILG. Topologically, residues 109 to 111 are periplasmic; that stretch reads STV.

It belongs to the ArnE family. Heterodimer of ArnE and ArnF.

The protein localises to the cell inner membrane. It participates in bacterial outer membrane biogenesis; lipopolysaccharide biosynthesis. In terms of biological role, translocates 4-amino-4-deoxy-L-arabinose-phosphoundecaprenol (alpha-L-Ara4N-phosphoundecaprenol) from the cytoplasmic to the periplasmic side of the inner membrane. The protein is Probable 4-amino-4-deoxy-L-arabinose-phosphoundecaprenol flippase subunit ArnE of Escherichia coli (strain UTI89 / UPEC).